Here is a 230-residue protein sequence, read N- to C-terminus: NAD(P)H-hydrate epimerase (230 aa).

The region spanning 11-218 (AIAVDQELFN…ALQRKYELNL (208 aa)) is the YjeF N-terminal domain. A (6S)-NADPHX-binding site is contributed by 61–65 (NNGGD). Residues asparagine 62 and aspartate 126 each coordinate K(+). (6S)-NADPHX contacts are provided by residues 130-136 (GFSFKPP) and aspartate 159. Serine 162 provides a ligand contact to K(+).

It belongs to the NnrE/AIBP family. Requires K(+) as cofactor.

It catalyses the reaction (6R)-NADHX = (6S)-NADHX. It carries out the reaction (6R)-NADPHX = (6S)-NADPHX. Its function is as follows. Catalyzes the epimerization of the S- and R-forms of NAD(P)HX, a damaged form of NAD(P)H that is a result of enzymatic or heat-dependent hydration. This is a prerequisite for the S-specific NAD(P)H-hydrate dehydratase to allow the repair of both epimers of NAD(P)HX. In Drosophila melanogaster (Fruit fly), this protein is NAD(P)H-hydrate epimerase.